Consider the following 131-residue polypeptide: Large-conductance mechanosensitive channel (131 aa).

The next 3 membrane-spanning stretches (helical) occupy residues Phe8 to Gly28, Ile30 to Ile50, and Gly72 to Ile92.

The protein belongs to the MscL family. In terms of assembly, homopentamer.

The protein localises to the cell membrane. Its function is as follows. Channel that opens in response to stretch forces in the membrane lipid bilayer. May participate in the regulation of osmotic pressure changes within the cell. The protein is Large-conductance mechanosensitive channel of Alkaliphilus oremlandii (strain OhILAs) (Clostridium oremlandii (strain OhILAs)).